Consider the following 458-residue polypeptide: Exodeoxyribonuclease 7 large subunit (458 aa).

This sequence belongs to the XseA family. Heterooligomer composed of large and small subunits.

The protein resides in the cytoplasm. It catalyses the reaction Exonucleolytic cleavage in either 5'- to 3'- or 3'- to 5'-direction to yield nucleoside 5'-phosphates.. In terms of biological role, bidirectionally degrades single-stranded DNA into large acid-insoluble oligonucleotides, which are then degraded further into small acid-soluble oligonucleotides. This chain is Exodeoxyribonuclease 7 large subunit, found in Stutzerimonas stutzeri (strain A1501) (Pseudomonas stutzeri).